The chain runs to 189 residues: Movement protein p22 (189 aa).

It belongs to the tombusvirus/aureusvirus movement protein p22 family. Interacts with host protein HFI22. In terms of processing, phosphorylated.

The protein resides in the host membrane. Cell-to-cell movement. Displays RNA-binding activity. The protein is Movement protein p22 of Capsicum annuum (Capsicum pepper).